We begin with the raw amino-acid sequence, 263 residues long: Undecaprenyl-diphosphatase (263 aa).

Transmembrane regions (helical) follow at residues 40 to 60 (PGVL…LVYF), 87 to 107 (LLII…DFFV), 109 to 129 (AFHN…LLFF), 186 to 206 (FSFL…LLEW), 219 to 239 (AGAV…MGVV), and 243 to 263 (RLYA…AISS).

The protein belongs to the UppP family.

The protein localises to the cell inner membrane. It carries out the reaction di-trans,octa-cis-undecaprenyl diphosphate + H2O = di-trans,octa-cis-undecaprenyl phosphate + phosphate + H(+). Its function is as follows. Catalyzes the dephosphorylation of undecaprenyl diphosphate (UPP). Confers resistance to bacitracin. The chain is Undecaprenyl-diphosphatase from Syntrophotalea carbinolica (strain DSM 2380 / NBRC 103641 / GraBd1) (Pelobacter carbinolicus).